The chain runs to 333 residues: Lipoyl synthase (333 aa).

[4Fe-4S] cluster is bound by residues C56, C61, C67, C82, C86, C89, and S293. The Radical SAM core domain maps to 68-282; that stretch reads WEDREATFLI…GRVGAELGFS (215 aa). The disordered stretch occupies residues 301–333; that stretch reads QQAMTARDQDRSEMSVPPESVSENSHGQRPSPW. Over residues 314–325 the composition is skewed to low complexity; it reads MSVPPESVSENS.

Belongs to the radical SAM superfamily. Lipoyl synthase family. [4Fe-4S] cluster is required as a cofactor.

The protein resides in the cytoplasm. It carries out the reaction [[Fe-S] cluster scaffold protein carrying a second [4Fe-4S](2+) cluster] + N(6)-octanoyl-L-lysyl-[protein] + 2 oxidized [2Fe-2S]-[ferredoxin] + 2 S-adenosyl-L-methionine + 4 H(+) = [[Fe-S] cluster scaffold protein] + N(6)-[(R)-dihydrolipoyl]-L-lysyl-[protein] + 4 Fe(3+) + 2 hydrogen sulfide + 2 5'-deoxyadenosine + 2 L-methionine + 2 reduced [2Fe-2S]-[ferredoxin]. The protein operates within protein modification; protein lipoylation via endogenous pathway; protein N(6)-(lipoyl)lysine from octanoyl-[acyl-carrier-protein]: step 2/2. Its function is as follows. Catalyzes the radical-mediated insertion of two sulfur atoms into the C-6 and C-8 positions of the octanoyl moiety bound to the lipoyl domains of lipoate-dependent enzymes, thereby converting the octanoylated domains into lipoylated derivatives. The sequence is that of Lipoyl synthase from Frankia casuarinae (strain DSM 45818 / CECT 9043 / HFP020203 / CcI3).